The following is a 359-amino-acid chain: MPLELELCPGRWVGGKHPCFIIAEIGQNHQGDIDVAKRMIRTAKECGADCAKFQKSELEFKFNRKALERPYTSKHSWGKTYGEHKRHLEFSHDQYKELQSYAQEIGIFFTASGMDEMAVEFLHELNVPFFKVGSGDTNNFPYLEKTAKKGRPMVISSGMQSMDTMKQVYQIVKPLNPNFCFLQCTSAYPLQPEDANLRVISEYQKLFPDIPIGYSGHETGIAISVAAVALGAKVLERHITLDKTWKGSDHSASLEPGELAELVRSVRLVERALGSPTKQLLPCEMACNEKLGKSVVAKVKIPAGTTLTLDMLTVKVGEPKGYPPEDIFNLAGKKVLVTIEEDDTVMEESVESHSKKIKA.

N6-acetyllysine is present on residues Lys61, Lys74, and Lys79. Ser275 carries the phosphoserine modification. The residue at position 290 (Lys290) is an N6-acetyllysine. The AFP-like domain maps to 294-353; sequence SVVAKVKIPAGTTLTLDMLTVKVGEPKGYPPEDIFNLAGKKVLVTIEEDDTVMEESVESH.

In terms of tissue distribution, ubiquitous.

It is found in the cytoplasm. The catalysed reaction is aldehydo-N-acetyl-D-mannosamine 6-phosphate + phosphoenolpyruvate + H2O = N-acetylneuraminate 9-phosphate + phosphate. Its function is as follows. Catalyzes condensation of phosphoenolpyruvate (PEP) and N-acetylmannosamine 6-phosphate (ManNAc-6-P) to synthesize N-acetylneuraminate-9-phosphate (Neu5Ac-9-P). Neu5Ac-9-P is the phosphorylated forms of sialic acid N-acetylneuraminic acid (Neu5Ac). In contrast with human ortholog, has no detectable activity towards D-mannose 6-phosphate. The chain is N-acetylneuraminate-9-phosphate synthase from Mus musculus (Mouse).